A 267-amino-acid polypeptide reads, in one-letter code: Placental prolactin-related protein 2 (267 aa).

2 N-linked (GlcNAc...) asparagine glycosylation sites follow: asparagine 99 and asparagine 121. 2 disulfide bridges follow: cysteine 126–cysteine 244 and cysteine 261–cysteine 267.

It belongs to the somatotropin/prolactin family.

The protein resides in the secreted. Placental prolactin-related proteins may play a specific role during gestation. This Bos taurus (Bovine) protein is Placental prolactin-related protein 2 (PRP2).